The chain runs to 139 residues: Actin-depolymerizing factor 9 (139 aa).

Residues 7–139 (GLAVNDECKF…SLDIIRARAH (133 aa)) enclose the ADF-H domain.

It belongs to the actin-binding proteins ADF family.

Functionally, actin-depolymerizing protein. Severs actin filaments (F-actin) and binds to actin monomers. The protein is Actin-depolymerizing factor 9 (ADF9) of Oryza sativa subsp. japonica (Rice).